The chain runs to 296 residues: 4-hydroxy-tetrahydrodipicolinate synthase (296 aa).

T47 serves as a coordination point for pyruvate. The active-site Proton donor/acceptor is the Y135. The active-site Schiff-base intermediate with substrate is the K164. I207 lines the pyruvate pocket.

It belongs to the DapA family. Homotetramer; dimer of dimers.

The protein resides in the cytoplasm. The catalysed reaction is L-aspartate 4-semialdehyde + pyruvate = (2S,4S)-4-hydroxy-2,3,4,5-tetrahydrodipicolinate + H2O + H(+). Its pathway is amino-acid biosynthesis; L-lysine biosynthesis via DAP pathway; (S)-tetrahydrodipicolinate from L-aspartate: step 3/4. In terms of biological role, catalyzes the condensation of (S)-aspartate-beta-semialdehyde [(S)-ASA] and pyruvate to 4-hydroxy-tetrahydrodipicolinate (HTPA). In Karelsulcia muelleri (strain GWSS) (Sulcia muelleri), this protein is 4-hydroxy-tetrahydrodipicolinate synthase.